The chain runs to 233 residues: Demethylmenaquinone methyltransferase (233 aa).

S-adenosyl-L-methionine contacts are provided by residues threonine 60, aspartate 81, and 106 to 107 (DA).

This sequence belongs to the class I-like SAM-binding methyltransferase superfamily. MenG/UbiE family.

It catalyses the reaction a 2-demethylmenaquinol + S-adenosyl-L-methionine = a menaquinol + S-adenosyl-L-homocysteine + H(+). The protein operates within quinol/quinone metabolism; menaquinone biosynthesis; menaquinol from 1,4-dihydroxy-2-naphthoate: step 2/2. Its function is as follows. Methyltransferase required for the conversion of demethylmenaquinol (DMKH2) to menaquinol (MKH2). In Staphylococcus saprophyticus subsp. saprophyticus (strain ATCC 15305 / DSM 20229 / NCIMB 8711 / NCTC 7292 / S-41), this protein is Demethylmenaquinone methyltransferase.